Here is an 87-residue protein sequence, read N- to C-terminus: UPF0367 protein Pro_0144 (87 aa).

It belongs to the UPF0367 family.

This chain is UPF0367 protein Pro_0144, found in Prochlorococcus marinus (strain SARG / CCMP1375 / SS120).